The following is a 139-amino-acid chain: MSEEQQVVNLKKKEKWGVAHIYSSYNNTIIHITDLTGAETVSRWSGGMVVKADRDEPSPYAAMIAAKRAAEEAMEKGFVGVHIKVRAPGGSKSKTPGPGAQAAIRALARAGLRIGRVEDVTPIPHDGTRPKGGRRGRRV.

The tract at residues Val117–Val139 is disordered.

The protein belongs to the universal ribosomal protein uS11 family. Part of the 30S ribosomal subunit.

Located on the platform of the 30S subunit. The sequence is that of Small ribosomal subunit protein uS11 from Thermococcus onnurineus (strain NA1).